Consider the following 96-residue polypeptide: UPF0235 protein Spro_4033 (96 aa).

The protein belongs to the UPF0235 family.

This chain is UPF0235 protein Spro_4033, found in Serratia proteamaculans (strain 568).